We begin with the raw amino-acid sequence, 170 residues long: CFA/I fimbrial subunit B (170 aa).

The first 23 residues, 1-23 (MKFKKTIGAMALTTMFVAVSASA), serve as a signal peptide directing secretion.

Belongs to the fimbrial CS1 protein family. As to quaternary structure, CFA/I fimbriae are rather rigid, thread-like filaments of 0.5-1 micrometer, with an apparent axial hole, and a diameter of 7 nanometers. A single CFA/I fimbria consists of about 100 identical protein subunits.

The protein resides in the fimbrium. Functionally, fimbriae (also called pili), polar filaments radiating from the surface of the bacterium to a length of 0.5-1.5 micrometers and numbering 100-300 per cell, enable bacteria to colonize the epithelium of specific host organs. In Escherichia coli O78:H11 (strain H10407 / ETEC), this protein is CFA/I fimbrial subunit B (cfaB).